The primary structure comprises 446 residues: Exodeoxyribonuclease 7 large subunit (446 aa).

This sequence belongs to the XseA family. Heterooligomer composed of large and small subunits.

The protein localises to the cytoplasm. It catalyses the reaction Exonucleolytic cleavage in either 5'- to 3'- or 3'- to 5'-direction to yield nucleoside 5'-phosphates.. Functionally, bidirectionally degrades single-stranded DNA into large acid-insoluble oligonucleotides, which are then degraded further into small acid-soluble oligonucleotides. The protein is Exodeoxyribonuclease 7 large subunit of Streptococcus equi subsp. zooepidemicus (strain MGCS10565).